A 387-amino-acid chain; its full sequence is Protein RecA (387 aa).

Residue 80 to 87 (GPESSGKT) coordinates ATP. Positions 348–387 (LDDSEVAETEEETTASKTKAKAKKEEKAVETEEIELELED) are disordered. Composition is skewed to acidic residues over residues 349 to 360 (DDSEVAETEEET) and 378 to 387 (TEEIELELED).

The protein belongs to the RecA family.

The protein resides in the cytoplasm. In terms of biological role, can catalyze the hydrolysis of ATP in the presence of single-stranded DNA, the ATP-dependent uptake of single-stranded DNA by duplex DNA, and the ATP-dependent hybridization of homologous single-stranded DNAs. It interacts with LexA causing its activation and leading to its autocatalytic cleavage. The protein is Protein RecA of Lactococcus lactis subsp. cremoris (strain MG1363).